The following is a 101-amino-acid chain: Hg-scorpine-like-2 (101 aa).

The signal sequence occupies residues 1–17 (MKLTILILLVITSFCSC). A BetaSPN-type CS-alpha/beta domain is found at 60–100 (QQLCMFNKDVAGWCEKSCQQSAHQKGYCHGTKCKCGIPLNY). 3 disulfide bridges follow: Cys-63–Cys-87, Cys-73–Cys-92, and Cys-77–Cys-94.

It belongs to the long chain scorpion toxin family. Class 3 subfamily. In terms of tissue distribution, expressed by the venom gland.

The protein resides in the secreted. In terms of biological role, inhibits voltage-gated potassium channels. This Hoffmannihadrurus gertschi (Scorpion) protein is Hg-scorpine-like-2.